The chain runs to 306 residues: tRNA dimethylallyltransferase (306 aa).

14–21 (GPTAAGKS) lines the ATP pocket. Substrate is bound at residue 16–21 (TAAGKS). The tract at residues 39-42 (DSRL) is interaction with substrate tRNA.

It belongs to the IPP transferase family. In terms of assembly, monomer. Mg(2+) is required as a cofactor.

The enzyme catalyses adenosine(37) in tRNA + dimethylallyl diphosphate = N(6)-dimethylallyladenosine(37) in tRNA + diphosphate. In terms of biological role, catalyzes the transfer of a dimethylallyl group onto the adenine at position 37 in tRNAs that read codons beginning with uridine, leading to the formation of N6-(dimethylallyl)adenosine (i(6)A). The protein is tRNA dimethylallyltransferase of Synechococcus elongatus (strain ATCC 33912 / PCC 7942 / FACHB-805) (Anacystis nidulans R2).